The following is a 924-amino-acid chain: Inositol polyphosphate 4-phosphatase type II (924 aa).

The segment covering 1–13 has biased composition (basic and acidic residues); it reads MEIKEEGASEEGQ. 3 disordered regions span residues 1-24, 481-516, and 546-570; these read MEIK…ANDP, ILKK…HSDY, and DGGS…AIPS. Residues 23 to 165 form the C2 domain; that stretch reads DPGDCQFTSI…LKSKEQLLVL (143 aa).

It belongs to the inositol 3,4-bisphosphate 4-phosphatase family. Widely expressed with highest levels occurring in the skeletal muscle and heart.

The enzyme catalyses a 1,2-diacyl-sn-glycero-3-phospho-(1D-myo-inositol-3,4-bisphosphate) + H2O = a 1,2-diacyl-sn-glycero-3-phospho-(1D-myo-inositol-3-phosphate) + phosphate. The catalysed reaction is 1D-myo-inositol 1,3,4-trisphosphate + H2O = 1D-myo-inositol 1,3-bisphosphate + phosphate. It carries out the reaction 1D-myo-inositol 3,4-bisphosphate + H2O = 1D-myo-inositol 3-phosphate + phosphate. The protein operates within signal transduction; phosphatidylinositol signaling pathway. Its activity is regulated as follows. Strongly inhibited by inositol hexakisphosphate. Its function is as follows. Catalyzes the hydrolysis of the 4-position phosphate of phosphatidylinositol 3,4-bisphosphate, inositol 1,3,4-trisphosphate and inositol 3,4-trisphosphate. Plays a role in the late stages of macropinocytosis by dephosphorylating phosphatidylinositol 3,4-bisphosphate in membrane ruffles. The lipid phosphatase activity is critical for tumor suppressor function. Antagonizes the PI3K-AKT/PKB signaling pathway by dephosphorylating phosphoinositides and thereby modulating cell cycle progression and cell survival. This is Inositol polyphosphate 4-phosphatase type II (INPP4B) from Homo sapiens (Human).